The sequence spans 106 residues: Putative defensin-like protein 224 (106 aa).

Residues 1 to 23 form the signal peptide; that stretch reads MKTLSLFFTLVILISSCVSNLMA. 3 cysteine pairs are disulfide-bonded: Cys60–Cys78, Cys64–Cys84, and Cys68–Cys86.

Belongs to the DEFL family.

The protein resides in the secreted. The chain is Putative defensin-like protein 224 from Arabidopsis thaliana (Mouse-ear cress).